A 261-amino-acid polypeptide reads, in one-letter code: Aquaporin-8 (261 aa).

Topologically, residues 1-36 (MSGEQTPMCSMDLPEVKVKTSMAGRCRVFWYEQYVQ) are cytoplasmic. The chain crosses the membrane as a helical span at residues 37–57 (PCIVELVGSALFIFIGCLSVI). Position 53 is a cysteine persulfide (Cys53). The residue at position 53 (Cys53) is a Cysteine sulfenic acid (-SOH). Over 58-84 (ENSPNTGLLQPALAHGLALGLIIATLG) the chain is Extracellular. The helical transmembrane segment at 85–105 (NISGGHFNPAVSLAVTVIGGL) threads the bilayer. The short motif at 92-94 (NPA) is the NPA 1 element. At 106–107 (KT) the chain is on the cytoplasmic side. A helical membrane pass occupies residues 108–128 (MLLIPYWISQLFGGLIGAALA). Residues 129–156 (KVVSPEERFWNASGAAFAIVQEQEQVAE) lie on the Extracellular side of the membrane. The N-linked (GlcNAc...) asparagine glycan is linked to Asn139. Residues 157–177 (ALGIEIILTMLLVLAVCMGAV) traverse the membrane as a helical segment. At 178-183 (NEKTMG) the chain is on the cytoplasmic side. Residues 184 to 204 (PLAPFSIGFSVIVDILAGGSI) form a helical membrane-spanning segment. Over 205–228 (SGACMNPARAFGPAVMAGYWDFHW) the chain is Extracellular. Positions 210-212 (NPA) match the NPA 2 motif. The chain crosses the membrane as a helical span at residues 229–249 (IYWLGPLLAGLFVGLLIRLLI). Residues 250–261 (GDEKTRLILKSR) are Cytoplasmic-facing.

Belongs to the MIP/aquaporin (TC 1.A.8) family. Post-translationally, sulfenylation at Cys-53(C53-SOH) when hydrogen peroxide flows through the AQP8 channel, making it susceptible to hydrogen sulfide produced by CBS. In terms of processing, persulfidation at Cys-53 is required to gate AQP8 channel; under stress condition, hydrogen peroxide accumulates in the cell leading to CBS activation that produces hydrogen sulfide inducing persulfidation of oxidized Cys-53 (C53-SOH). N-glycosylated. Expressed in placenta. Highly expressed in the epithelial layer of gall-bladders. Expressed in heart, kidney, submandibular gland, liver, small intestine, colon, testes, and epididymis. In testes, expressed in spermatogenic cells.

Its subcellular location is the cell membrane. It is found in the mitochondrion inner membrane. The protein resides in the apical cell membrane. The protein localises to the basolateral cell membrane. It localises to the smooth endoplasmic reticulum membrane. The catalysed reaction is H2O(in) = H2O(out). The enzyme catalyses urea(in) = urea(out). It catalyses the reaction NH4(+)(in) = NH4(+)(out). It carries out the reaction H2O2(out) = H2O2(in). The catalysed reaction is formamide(out) = formamide(in). The enzyme catalyses methylamine(out) = methylamine(in). Its activity is regulated as follows. Reversibly gated by a two-step sulfenylation-persulfidation process in cells undergoing diverse stresses. Channel that allows the facilitated permeation of water and uncharged molecules, such as hydrogen peroxide and the neutral form of ammonia (NH3), through cellular membranes such as plasma membrane, inner mitochondrial membrane and endoplasmic reticulum membrane of several tissues. The transport of ammonia neutral form induces a parallel transport of proton, at alkaline pH when the concentration of ammonia is high. However, it is unclear whether the transport of proton takes place via the aquaporin or via an endogenous pathway. Also, may transport ammonia analogs such as formamide and methylamine, a transport favourited at basic pH due to the increase of unprotonated (neutral) form, which is expected to favor diffusion. In vitro, may be also permeable to urea but not to glycerol. Does not transport urea or glycerol. The water transport mechanism is mercury- and copper-sensitive and passive in response to osmotic driving forces. At the canicular plasma membrane, mediates the osmotic transport of water toward the bile canaliculus and facilitates the cAMP-induced bile canalicular water secretion, a process involved in bile formation. In addition, mediates the hydrogen peroxide release from hepatocyte mitochondria that modulates the SREBF2-mediated cholesterol synthesis and facilitates the mitochondrial ammonia uptake which is metabolized into urea, mainly under glucagon stimulation. In B cells, transports the CYBB-generated hydrogen peroxide from the external leaflet of the plasma membrane to the cytosol to promote B cell activation and differentiation for signal amplification. In the small intestine and colon system, mediates water transport through mitochondria and apical membrane of epithelial cells. May play an important role in the adaptive response of proximal tubule cells to acidosis possibly facilitating mitochondrial ammonia transport. This Mus musculus (Mouse) protein is Aquaporin-8.